Here is a 393-residue protein sequence, read N- to C-terminus: Argininosuccinate synthase (393 aa).

Residues 10-18 (AYSGGLDTS) and alanine 37 each bind ATP. Tyrosine 88 contributes to the L-citrulline binding site. Position 118 (glycine 118) interacts with ATP. Positions 120, 124, and 125 each coordinate L-aspartate. Asparagine 124 lines the L-citrulline pocket. L-citrulline contacts are provided by arginine 128, serine 176, serine 185, glutamate 261, and tyrosine 273.

The protein belongs to the argininosuccinate synthase family. Type 1 subfamily. As to quaternary structure, homotetramer.

Its subcellular location is the cytoplasm. The enzyme catalyses L-citrulline + L-aspartate + ATP = 2-(N(omega)-L-arginino)succinate + AMP + diphosphate + H(+). It participates in amino-acid biosynthesis; L-arginine biosynthesis; L-arginine from L-ornithine and carbamoyl phosphate: step 2/3. In Carsonella ruddii (strain PV), this protein is Argininosuccinate synthase.